A 142-amino-acid chain; its full sequence is Ninjurin-2 (142 aa).

The interval 1–21 (MESARENIDLQPGSSDPRSQP) is disordered. Topologically, residues 1-60 (MESARENIDLQPGSSDPRSQPINLNHYATKKSVAESMLDVALFMSNAMRLKAVLEQGPSS) are extracellular. Positions 12–21 (PGSSDPRSQP) are enriched in polar residues. The tract at residues 25 to 37 (NHYATKKSVAESM) is helix alpha1. The segment at 38 to 57 (LDVALFMSNAMRLKAVLEQG) is helix alpha2. The helical transmembrane segment at 61 to 92 (HYYTTLVTLISLSLLLQVVIGVLLVVIARLNL) threads the bilayer. Topologically, residues 93-96 (NEVE) are cytoplasmic. A helical membrane pass occupies residues 97 to 126 (KQWRLNQLNNAATILVFFTVVINVFITAFG). Gln-103 is a binding site for cholesterol. Topologically, residues 127 to 142 (AHKTGFLAARASRNPL) are extracellular.

The protein belongs to the ninjurin family. As to quaternary structure, homooligomer; in response to stimuli, homooligomerizes into filaments. In contrast to NINJ1, the filament is curved toward the intracellular space, preventing its circularization on a relatively flat membrane to mediate plasma membrane rupture: curvature is caused by cholesterol-binding at the cytoplasmic leaflet. As to expression, widely expressed. In adult, higher expression in the bone marrow and peripheral blood lymphocytes, medium in the lung, lymph node, thyroid, uterus, thymus, spleen, prostate and skeletal muscle, lower in the liver, placenta, brain, heart and kidney. In embryo, higher expression in the thymus, heart and liver, lower in the spleen, lung, brain and kidney.

The protein localises to the cell membrane. Functionally, its role in unclear. In contrast to NINJ1 paralog, does not mediate plasma membrane rupture (cytolysis) downstream of necroptotic and pyroptotic programmed cell death. While it is able to oligomerize and form filaments, filaments are curved toward the intracellular space, preventing circularization to mediate plasma membrane rupture. May act as a homophilic transmembrane adhesion molecule involved in nerve regeneration. Promotes axonal growth. The polypeptide is Ninjurin-2 (Homo sapiens (Human)).